A 48-amino-acid chain; its full sequence is Large ribosomal subunit protein eL40 (48 aa).

This sequence belongs to the eukaryotic ribosomal protein eL40 family.

This chain is Large ribosomal subunit protein eL40, found in Methanosphaera stadtmanae (strain ATCC 43021 / DSM 3091 / JCM 11832 / MCB-3).